We begin with the raw amino-acid sequence, 458 residues long: Elongation factor 1-alpha 1 (458 aa).

At Gly-2 the chain carries N,N,N-trimethylglycine. Lys-3 is modified (N6,N6-dimethyllysine; alternate). N6-methyllysine; alternate is present on Lys-3. Positions 5–240 (KTHVNVVVIG…DAIEPPTRPT (236 aa)) constitute a tr-type G domain. Residues 14–21 (GHVDSGKS) form a G1 region. Residue 14–21 (GHVDSGKS) coordinates GTP. Lys-30 carries the N6-methyllysine modification. Positions 70 to 74 (GITID) are G2. Position 79 is an N6,N6,N6-trimethyllysine (Lys-79). Residues 91–94 (DAPG) form a G3 region. Residues 91–95 (DAPGH) and 153–156 (NKMD) contribute to the GTP site. The tract at residues 153 to 156 (NKMD) is G4. A G5 region spans residues 192–194 (SGW). Lys-316 is modified (N6,N6-dimethyllysine; alternate). Lys-316 carries the post-translational modification N6-methyllysine; alternate. Position 390 is an N6-methyllysine (Lys-390).

This sequence belongs to the TRAFAC class translation factor GTPase superfamily. Classic translation factor GTPase family. EF-Tu/EF-1A subfamily.

It localises to the cytoplasm. Functionally, this protein promotes the GTP-dependent binding of aminoacyl-tRNA to the A-site of ribosomes during protein biosynthesis. This Candida albicans (strain SC5314 / ATCC MYA-2876) (Yeast) protein is Elongation factor 1-alpha 1 (TEF1).